The following is a 105-amino-acid chain: Co-chaperonin GroES 3 (105 aa).

This sequence belongs to the GroES chaperonin family. As to quaternary structure, heptamer of 7 subunits arranged in a ring. Interacts with the chaperonin GroEL.

The protein localises to the cytoplasm. Its function is as follows. Together with the chaperonin GroEL, plays an essential role in assisting protein folding. The GroEL-GroES system forms a nano-cage that allows encapsulation of the non-native substrate proteins and provides a physical environment optimized to promote and accelerate protein folding. GroES binds to the apical surface of the GroEL ring, thereby capping the opening of the GroEL channel. This Rhizobium meliloti (strain 1021) (Ensifer meliloti) protein is Co-chaperonin GroES 3.